An 805-amino-acid chain; its full sequence is MLVLMLAAAVATMVRAHTLCRVHTVRTGKVFKSNIQLQGDPLFYAFPNTFVLKNVCKADISVYLGQKVFLTIDNFESSLLPLTVPKSLAVGVPSITSAHFVSGSLVLFVISGKGYSYDYYENTWRKLEGISEPVSHISGDVCCFKGSFCLELSNNLFAYLRGGQIPGTNIYFSDNGGFSFQLMNTDKLSHLTGTLGGIFHLHSMSQVGVLMVENNLGTFHYMEYPLNHSMGIAFSYKNLLEVIMKPYQRGFMVLWNQKSILVSSNSGQIVEHVRLIDQKIFTDLDVEHANINIYSVASNAYELAFLVAEDHLYYGSQSYMGTYVIKLPHQPLWSTHTSIYFEDIGILQVLTPVADPHFAAYDFDKCTVNVQSSLMDEKLALQPCNVELLESTMINTMFTIDMNSKLKLSALMIPRKGENPTPLVMVSNPHALGFKANLNEFGNTFDGNSKYKLDIELKQQHHWGNSDFNFTASIKRHAISSVTVDIADKTLSCVDLKPLSTLISVGCDMTKKIVVQNKISACTMGILNPVQLQKNYTYTIEKEAYDPINHNGEAQDDLIVFYEYKDLGCPRLVYYDKPWKPVVELWKNGIVEEIMNAEYVISEINGLVTYSYSLTAATANCRSQPQNWSTFESDIENEEPFLWNRENYVSCHEDNKDNPLLWPNVEYQVLGGQTNNKIIFGQRNGIYTFHLSVVDPYYSYCNLNTIFSVYVHGALPVTKFQPLLTILLMVTTTLLTAWLAYAIPKQLRSEKGQRLLGFCYQILQLCLGVCFCTWLRGKLRQWLRPRRVKDQNRGKVRVAQKHPET.

The signal sequence occupies residues 1–16 (MLVLMLAAAVATMVRA). Residues 17 to 723 (HTLCRVHTVR…ALPVTKFQPL (707 aa)) are Extracellular-facing. 7 cysteine pairs are disulfide-bonded: Cys-20/Cys-366, Cys-56/Cys-143, Cys-142/Cys-149, Cys-384/Cys-493, Cys-507/Cys-701, Cys-522/Cys-569, and Cys-621/Cys-651. Asn-227, Asn-419, Asn-469, Asn-535, and Asn-627 each carry an N-linked (GlcNAc...) asparagine glycan. Residues 724–745 (LTILLMVTTTLLTAWLAYAIPK) form a helical membrane-spanning segment. Over 746 to 805 (QLRSEKGQRLLGFCYQILQLCLGVCFCTWLRGKLRQWLRPRRVKDQNRGKVRVAQKHPET) the chain is Cytoplasmic.

It belongs to the CATSPERD family. Component of the CatSper complex or CatSpermasome composed of the core pore-forming members CATSPER1, CATSPER2, CATSPER3 and CATSPER4 as well as auxiliary members CATSPERB, CATSPERG2, CATSPERD, CATSPERE, CATSPERZ, C2CD6/CATSPERT, SLCO6C1, TMEM249, TMEM262 and EFCAB9. HSPA1 may be an additional auxiliary complex member. The core complex members CATSPER1, CATSPER2, CATSPER3 and CATSPER4 form a heterotetrameric channel. The auxiliary CATSPERB, CATSPERG2, CATSPERD and CATSPERE subunits form a pavilion-like structure over the pore which stabilizes the complex through interactions with CATSPER4, CATSPER3, CATSPER1 and CATSPER2 respectively. SLCO6C1 interacts with CATSPERE and TMEM262/CATSPERH interacts with CATSPERB, further stabilizing the complex. C2CD6/CATSPERT interacts at least with CATSPERD and is required for targeting the CatSper complex in the flagellar membrane. Testis-specific.

The protein resides in the cell projection. The protein localises to the cilium. It localises to the flagellum membrane. Its function is as follows. Auxiliary component of the CatSper complex, a complex involved in sperm cell hyperactivation. Sperm cell hyperactivation is needed for sperm motility which is essential late in the preparation of sperm for fertilization. Required for CATSPER1 stability before intraflagellar transport and/or incorporation of the CatSper complex channel into the flagellar membrane. The chain is Cation channel sperm-associated auxiliary subunit delta from Mus musculus (Mouse).